A 264-amino-acid chain; its full sequence is Aminoglycoside 3'-phosphotransferase (264 aa).

Aspartate 190 acts as the Proton acceptor in catalysis.

Belongs to the aminoglycoside phosphotransferase family.

The catalysed reaction is kanamycin A + ATP = kanamycin 3'-phosphate + ADP + H(+). In terms of biological role, resistance to kanamycin and structurally-related aminoglycosides, including amikacin. In Enterococcus faecalis (Streptococcus faecalis), this protein is Aminoglycoside 3'-phosphotransferase (aphA).